The primary structure comprises 96 residues: Co-chaperonin GroES (96 aa).

It belongs to the GroES chaperonin family. As to quaternary structure, heptamer of 7 subunits arranged in a ring. Interacts with the chaperonin GroEL.

The protein localises to the cytoplasm. Its function is as follows. Together with the chaperonin GroEL, plays an essential role in assisting protein folding. The GroEL-GroES system forms a nano-cage that allows encapsulation of the non-native substrate proteins and provides a physical environment optimized to promote and accelerate protein folding. GroES binds to the apical surface of the GroEL ring, thereby capping the opening of the GroEL channel. This Aggregatibacter actinomycetemcomitans (Actinobacillus actinomycetemcomitans) protein is Co-chaperonin GroES.